The chain runs to 215 residues: Pyridoxine/pyridoxamine 5'-phosphate oxidase (215 aa).

Residues 9 to 12 (RRDY) and K69 contribute to the substrate site. Residues 64–69 (RVLLLK), 79–80 (FT), K86, and Q108 contribute to the FMN site. Y126, R130, and S134 together coordinate substrate. FMN-binding positions include 143–144 (QS) and W188. Position 194-196 (194-196 (RLH)) interacts with substrate. R198 contributes to the FMN binding site.

This sequence belongs to the pyridoxamine 5'-phosphate oxidase family. Homodimer. The cofactor is FMN.

The enzyme catalyses pyridoxamine 5'-phosphate + O2 + H2O = pyridoxal 5'-phosphate + H2O2 + NH4(+). The catalysed reaction is pyridoxine 5'-phosphate + O2 = pyridoxal 5'-phosphate + H2O2. Its pathway is cofactor metabolism; pyridoxal 5'-phosphate salvage; pyridoxal 5'-phosphate from pyridoxamine 5'-phosphate: step 1/1. It participates in cofactor metabolism; pyridoxal 5'-phosphate salvage; pyridoxal 5'-phosphate from pyridoxine 5'-phosphate: step 1/1. In terms of biological role, catalyzes the oxidation of either pyridoxine 5'-phosphate (PNP) or pyridoxamine 5'-phosphate (PMP) into pyridoxal 5'-phosphate (PLP). The chain is Pyridoxine/pyridoxamine 5'-phosphate oxidase from Pseudomonas syringae pv. syringae (strain B728a).